The sequence spans 449 residues: MSHKACYTNPGAGVKRPRNDTGNKLTVVLGAQWGDEGKGKVVDLLATESDIICRCQGGNNAGHTVVVDGKEYDFHLLPSGIINSKALSVIGNGVVIHLPGLFEEAEKNEKNGLKDWEKRLIISDRAHIVFDFHQAVDGLQEVQRQAQEGKNIGTTKKGIGPTYSSKASRTGLRICDLLADFKDFSMRFKNLAQQYQAMFPTLEVDVDGQLKKLKEYAERIRPMVRDGVYFMYDAINGPPKKILVEGANAALLDIDFGTYPFVTSSNCTVGGVCTGLGIPPLNIGDVYGVVKAYTTRVGIGAFPTEQLNEVGELLQTRGHEVGVTTGRKRRCGWLDLVILRYANMINGFTAFALTKLDILDVMDEIKVGVSYKLNGKKIPYFPANMDVLQKVEVEYEKLPGWKSDTSACRKWEDLPVKAQNYIRFVEIHVGVPIKWVGVGKARESMIQMF.

Residues G34 to K40 and G62 to T64 each bind GTP. D35 acts as the Proton acceptor in catalysis. Mg(2+) contacts are provided by D35 and G62. D35 contacts substrate. Residues D35–K38, N60–H63, T155, R169, N248, T263, and R327 contribute to the IMP site. The active-site Proton donor is the H63. Residue V323–R329 participates in substrate binding. Residues R329, K355–D357, and G437–K440 each bind GTP.

It belongs to the adenylosuccinate synthetase family. In terms of assembly, homodimer. Requires Mg(2+) as cofactor.

It is found in the cytoplasm. It carries out the reaction IMP + L-aspartate + GTP = N(6)-(1,2-dicarboxyethyl)-AMP + GDP + phosphate + 2 H(+). It participates in purine metabolism; AMP biosynthesis via de novo pathway; AMP from IMP: step 1/2. Its function is as follows. Component of the purine nucleotide cycle (PNC), which interconverts IMP and AMP to regulate the nucleotide levels in various tissues, and which contributes to glycolysis and ammoniagenesis. Catalyzes the first committed step in the biosynthesis of AMP from IMP. This is Adenylosuccinate synthetase isozyme 1 B (adss1b) from Salmo salar (Atlantic salmon).